Consider the following 276-residue polypeptide: NADPH-dependent 7-cyano-7-deazaguanine reductase (276 aa).

83–85 (IES) lines the substrate pocket. 85-86 (SK) is a binding site for NADPH. Catalysis depends on Cys-184, which acts as the Thioimide intermediate. Asp-191 (proton donor) is an active-site residue. Residue 223–224 (HE) participates in substrate binding. NADPH is bound at residue 252 to 253 (RG).

Belongs to the GTP cyclohydrolase I family. QueF type 2 subfamily. In terms of assembly, homodimer.

It is found in the cytoplasm. It catalyses the reaction 7-aminomethyl-7-carbaguanine + 2 NADP(+) = 7-cyano-7-deazaguanine + 2 NADPH + 3 H(+). The protein operates within tRNA modification; tRNA-queuosine biosynthesis. Functionally, catalyzes the NADPH-dependent reduction of 7-cyano-7-deazaguanine (preQ0) to 7-aminomethyl-7-deazaguanine (preQ1). The polypeptide is NADPH-dependent 7-cyano-7-deazaguanine reductase (Pseudomonas syringae pv. syringae (strain B728a)).